We begin with the raw amino-acid sequence, 633 residues long: Probable extracellular metalloproteinase 5 (633 aa).

A signal peptide spans 1–20; the sequence is MHGLLLAAAGLLSLPLHVLA. A propeptide spanning residues 21–244 is cleaved from the precursor; the sequence is HPQPSTNLAG…VHNVVDYVSH (224 aa). A glycan (N-linked (GlcNAc...) asparagine) is linked at Asn-285. A Zn(2+)-binding site is contributed by His-428. Glu-429 is a catalytic residue. Position 432 (His-432) interacts with Zn(2+). Residues Asn-592 and Asn-621 are each glycosylated (N-linked (GlcNAc...) asparagine).

This sequence belongs to the peptidase M36 family. The cofactor is Zn(2+).

It localises to the secreted. Its function is as follows. Secreted metalloproteinase probably acting as a virulence factor. The protein is Probable extracellular metalloproteinase 5 (MEP5) of Arthroderma benhamiae (strain ATCC MYA-4681 / CBS 112371) (Trichophyton mentagrophytes).